We begin with the raw amino-acid sequence, 287 residues long: Probable endonuclease 4 (287 aa).

The Zn(2+) site is built by histidine 69, histidine 109, glutamate 144, aspartate 178, histidine 181, histidine 215, aspartate 228, histidine 230, and glutamate 260.

Belongs to the AP endonuclease 2 family. Zn(2+) serves as cofactor.

The catalysed reaction is Endonucleolytic cleavage to 5'-phosphooligonucleotide end-products.. Endonuclease IV plays a role in DNA repair. It cleaves phosphodiester bonds at apurinic or apyrimidinic (AP) sites, generating a 3'-hydroxyl group and a 5'-terminal sugar phosphate. This Thermotoga sp. (strain RQ2) protein is Probable endonuclease 4.